The primary structure comprises 189 residues: Large ribosomal subunit protein eL20 (189 aa).

This sequence belongs to the eukaryotic ribosomal protein eL20 family.

It localises to the cytoplasm. The protein is Large ribosomal subunit protein eL20 (RPL18A) of Tetrahymena thermophila.